The following is a 186-amino-acid chain: Alkyl hydroperoxide reductase AhpD (186 aa).

The active-site Proton donor is Cys132. Cys132 and Cys135 are joined by a disulfide. The active-site Cysteine sulfenic acid (-SOH) intermediate is Cys135.

This sequence belongs to the AhpD family.

It carries out the reaction N(6)-[(R)-dihydrolipoyl]-L-lysyl-[lipoyl-carrier protein] + a hydroperoxide = N(6)-[(R)-lipoyl]-L-lysyl-[lipoyl-carrier protein] + an alcohol + H2O. Functionally, antioxidant protein with alkyl hydroperoxidase activity. Required for the reduction of the AhpC active site cysteine residues and for the regeneration of the AhpC enzyme activity. The sequence is that of Alkyl hydroperoxide reductase AhpD from Anaeromyxobacter sp. (strain K).